The chain runs to 167 residues: Peptide deformylase (167 aa).

Positions 90 and 132 each coordinate Fe cation. The active site involves Glu133. His136 provides a ligand contact to Fe cation.

Belongs to the polypeptide deformylase family. It depends on Fe(2+) as a cofactor.

The catalysed reaction is N-terminal N-formyl-L-methionyl-[peptide] + H2O = N-terminal L-methionyl-[peptide] + formate. In terms of biological role, removes the formyl group from the N-terminal Met of newly synthesized proteins. Requires at least a dipeptide for an efficient rate of reaction. N-terminal L-methionine is a prerequisite for activity but the enzyme has broad specificity at other positions. This is Peptide deformylase from Dehalococcoides mccartyi (strain CBDB1).